The following is a 115-amino-acid chain: Large ribosomal subunit protein bL20 (115 aa).

The protein belongs to the bacterial ribosomal protein bL20 family.

Functionally, binds directly to 23S ribosomal RNA and is necessary for the in vitro assembly process of the 50S ribosomal subunit. It is not involved in the protein synthesizing functions of that subunit. The sequence is that of Large ribosomal subunit protein bL20 from Cytophaga hutchinsonii (strain ATCC 33406 / DSM 1761 / CIP 103989 / NBRC 15051 / NCIMB 9469 / D465).